The following is a 224-amino-acid chain: 7-cyano-7-deazaguanine synthase (224 aa).

Residue 10-20 (LSGGLDSATVV) coordinates ATP. Zn(2+) is bound by residues C189, C199, C202, and C205.

It belongs to the QueC family. Requires Zn(2+) as cofactor.

It carries out the reaction 7-carboxy-7-deazaguanine + NH4(+) + ATP = 7-cyano-7-deazaguanine + ADP + phosphate + H2O + H(+). It participates in purine metabolism; 7-cyano-7-deazaguanine biosynthesis. Its function is as follows. Catalyzes the ATP-dependent conversion of 7-carboxy-7-deazaguanine (CDG) to 7-cyano-7-deazaguanine (preQ(0)). The chain is 7-cyano-7-deazaguanine synthase from Pseudomonas putida (strain W619).